Reading from the N-terminus, the 441-residue chain is Aminopeptidase C (441 aa).

Catalysis depends on residues Cys70, His361, and Asn382.

This sequence belongs to the peptidase C1 family.

The catalysed reaction is Inactivates bleomycin B2 (a cytotoxic glycometallopeptide) by hydrolysis of a carboxyamide bond of beta-aminoalanine, but also shows general aminopeptidase activity. The specificity varies somewhat with source, but amino acid arylamides of Met, Leu and Ala are preferred.. This Listeria monocytogenes serovar 1/2a (strain ATCC BAA-679 / EGD-e) protein is Aminopeptidase C (pepC).